Here is a 106-residue protein sequence, read N- to C-terminus: uncharacterized protein (106 aa).

Transmembrane regions (helical) follow at residues 43–63 and 86–106; these read CSTI…LAIV and IPEL…FSLF.

Its subcellular location is the membrane. This is an uncharacterized protein from Saccharomyces cerevisiae (strain ATCC 204508 / S288c) (Baker's yeast).